The following is a 325-amino-acid chain: Tetraacyldisaccharide 4'-kinase (325 aa).

55–62 (TAGGNGKT) lines the ATP pocket.

This sequence belongs to the LpxK family.

It carries out the reaction a lipid A disaccharide + ATP = a lipid IVA + ADP + H(+). It participates in glycolipid biosynthesis; lipid IV(A) biosynthesis; lipid IV(A) from (3R)-3-hydroxytetradecanoyl-[acyl-carrier-protein] and UDP-N-acetyl-alpha-D-glucosamine: step 6/6. Functionally, transfers the gamma-phosphate of ATP to the 4'-position of a tetraacyldisaccharide 1-phosphate intermediate (termed DS-1-P) to form tetraacyldisaccharide 1,4'-bis-phosphate (lipid IVA). This chain is Tetraacyldisaccharide 4'-kinase, found in Salmonella enteritidis PT4 (strain P125109).